We begin with the raw amino-acid sequence, 268 residues long: Interleukin-1 beta (268 aa).

Positions methionine 1–aspartate 116 are excised as a propeptide.

It belongs to the IL-1 family. In terms of assembly, monomer. In its precursor form, weakly interacts with full-length MEFV; the mature cytokine does not interact at all. Interacts with integrins ITGAV:ITGBV and ITGA5:ITGB1; integrin-binding is required for IL1B signaling. Interacts with cargo receptor TMED10; the interaction is direct and is required for the secretion of IL1B mature form. Interacts with HSP90AB1; the interaction facilitates cargo translocation into the ERGIC. Interacts with HSP90B1; the interaction facilitates cargo translocation into the ERGIC.

It localises to the cytoplasm. Its subcellular location is the cytosol. The protein resides in the secreted. It is found in the lysosome. The protein localises to the extracellular exosome. Functionally, potent pro-inflammatory cytokine. Initially discovered as the major endogenous pyrogen, induces prostaglandin synthesis, neutrophil influx and activation, T-cell activation and cytokine production, B-cell activation and antibody production, and fibroblast proliferation and collagen production. Promotes Th17 differentiation of T-cells. Synergizes with IL12/interleukin-12 to induce IFNG synthesis from T-helper 1 (Th1) cells. Plays a role in angiogenesis by inducing VEGF production synergistically with TNF and IL6. Involved in transduction of inflammation downstream of pyroptosis: its mature form is specifically released in the extracellular milieu by passing through the gasdermin-D (GSDMD) pore. This Rattus norvegicus (Rat) protein is Interleukin-1 beta.